The chain runs to 153 residues: NADPH-dependent 7-cyano-7-deazaguanine reductase (153 aa).

The disordered stretch occupies residues 1 to 26; that stretch reads MVKIHDGASQLGANVAAPRSPEEATL. Cys51 serves as the catalytic Thioimide intermediate. Asp58 (proton donor) is an active-site residue. Substrate-binding positions include 73-75 and 92-93; these read VES and HE.

Belongs to the GTP cyclohydrolase I family. QueF type 1 subfamily.

Its subcellular location is the cytoplasm. It catalyses the reaction 7-aminomethyl-7-carbaguanine + 2 NADP(+) = 7-cyano-7-deazaguanine + 2 NADPH + 3 H(+). It participates in tRNA modification; tRNA-queuosine biosynthesis. Catalyzes the NADPH-dependent reduction of 7-cyano-7-deazaguanine (preQ0) to 7-aminomethyl-7-deazaguanine (preQ1). The sequence is that of NADPH-dependent 7-cyano-7-deazaguanine reductase from Methylocella silvestris (strain DSM 15510 / CIP 108128 / LMG 27833 / NCIMB 13906 / BL2).